Consider the following 65-residue polypeptide: Large ribosomal subunit protein bL31 (65 aa).

The Zn(2+) site is built by Cys-16, Cys-18, Cys-36, and Cys-39.

It belongs to the bacterial ribosomal protein bL31 family. Type A subfamily. Part of the 50S ribosomal subunit. Requires Zn(2+) as cofactor.

In terms of biological role, binds the 23S rRNA. The sequence is that of Large ribosomal subunit protein bL31 from Geotalea daltonii (strain DSM 22248 / JCM 15807 / FRC-32) (Geobacter daltonii).